A 119-amino-acid polypeptide reads, in one-letter code: C-X-C motif chemokine 17 (119 aa).

Residues 1–21 form the signal peptide; that stretch reads MKVLISSLLLLLPLMLMSMVS. Intrachain disulfides connect cysteine 75-cysteine 103 and cysteine 77-cysteine 110. Residues 81–100 form a disordered region; sequence KGNVKKTRHQRHHRKPNKHS. Basic residues predominate over residues 82–100; sequence GNVKKTRHQRHHRKPNKHS.

Belongs to the intercrine alpha (chemokine CxC) family. In terms of processing, likely to undergo an endoproteolytic process to form a four-cysteine-containing mature peptide with a canonical CXC chemokine scaffold after secretion. As to expression, detected in trachea, stomach, lung and skeletal muscle. Detected in intestine and in normal and asthmatic lung (at protein level). Breast tumors showed 3- to 24-fold up-regulation.

The protein resides in the secreted. In terms of biological role, chemokine that acts as a chemoattractant for monocytes, macrophages and dendritic cells. Plays a role in angiogenesis and possibly in the development of tumors. Acts as an anti-inflammatory in the stomach. May play a role in the innate defense against infections. Activates the C-X-C chemokine receptor GPR35 to induce a rapid and transient rise in the level of intracellular calcium ions. Its function is as follows. Seems to exhibit much higher chemoattractant potency on monocytes and macrophages than 6-Cys CXCL17. This is C-X-C motif chemokine 17 (CXCL17) from Homo sapiens (Human).